A 720-amino-acid polypeptide reads, in one-letter code: Polyribonucleotide nucleotidyltransferase (720 aa).

2 residues coordinate Mg(2+): aspartate 485 and aspartate 491. Positions 552–615 (PRIHTIKINP…EAIRRIQALT (64 aa)) constitute a KH domain. In terms of domain architecture, S1 motif spans 621 to 689 (GRIYEGKVTR…RQGRIRLSIK (69 aa)). The segment at 697–720 (PAAESVAESAPAQEAVVEQVPMTE) is disordered. The span at 698–720 (AAESVAESAPAQEAVVEQVPMTE) shows a compositional bias: low complexity.

Belongs to the polyribonucleotide nucleotidyltransferase family. As to quaternary structure, component of the RNA degradosome, which is a multiprotein complex involved in RNA processing and mRNA degradation. It depends on Mg(2+) as a cofactor.

Its subcellular location is the cytoplasm. It carries out the reaction RNA(n+1) + phosphate = RNA(n) + a ribonucleoside 5'-diphosphate. Its function is as follows. Involved in mRNA degradation. Catalyzes the phosphorolysis of single-stranded polyribonucleotides processively in the 3'- to 5'-direction. This chain is Polyribonucleotide nucleotidyltransferase, found in Tolumonas auensis (strain DSM 9187 / NBRC 110442 / TA 4).